A 158-amino-acid polypeptide reads, in one-letter code: Transcription elongation factor GreA (158 aa).

A coiled-coil region spans residues 47–74 (AEYHAAKEEQSHNEGRINELEDKLARAD).

It belongs to the GreA/GreB family.

In terms of biological role, necessary for efficient RNA polymerase transcription elongation past template-encoded arresting sites. The arresting sites in DNA have the property of trapping a certain fraction of elongating RNA polymerases that pass through, resulting in locked ternary complexes. Cleavage of the nascent transcript by cleavage factors such as GreA or GreB allows the resumption of elongation from the new 3'terminus. GreA releases sequences of 2 to 3 nucleotides. This Rhodopseudomonas palustris (strain ATCC BAA-98 / CGA009) protein is Transcription elongation factor GreA.